A 215-amino-acid polypeptide reads, in one-letter code: Pyridoxine/pyridoxamine 5'-phosphate oxidase (215 aa).

Substrate contacts are provided by residues 9 to 12 (RRDY) and Lys-69. FMN is bound by residues 64–69 (RVLLLK), 79–80 (FT), Lys-86, and Gln-108. Tyr-126, Arg-130, and Ser-134 together coordinate substrate. Residues 143-144 (QS) and Trp-188 each bind FMN. 194-196 (RLH) lines the substrate pocket. Arg-198 is an FMN binding site.

Belongs to the pyridoxamine 5'-phosphate oxidase family. Homodimer. FMN serves as cofactor.

The enzyme catalyses pyridoxamine 5'-phosphate + O2 + H2O = pyridoxal 5'-phosphate + H2O2 + NH4(+). It carries out the reaction pyridoxine 5'-phosphate + O2 = pyridoxal 5'-phosphate + H2O2. Its pathway is cofactor metabolism; pyridoxal 5'-phosphate salvage; pyridoxal 5'-phosphate from pyridoxamine 5'-phosphate: step 1/1. It functions in the pathway cofactor metabolism; pyridoxal 5'-phosphate salvage; pyridoxal 5'-phosphate from pyridoxine 5'-phosphate: step 1/1. Catalyzes the oxidation of either pyridoxine 5'-phosphate (PNP) or pyridoxamine 5'-phosphate (PMP) into pyridoxal 5'-phosphate (PLP). This is Pyridoxine/pyridoxamine 5'-phosphate oxidase from Pseudomonas entomophila (strain L48).